The sequence spans 1128 residues: Translation initiation factor IF-2 (1128 aa).

Residues 57 to 519 (NSDKQILSIN…KETTRQRQKR (463 aa)) are disordered. Residues 70–83 (NKKDNYKQNKEDKS) show a composition bias toward basic and acidic residues. Low complexity predominate over residues 100 to 110 (KKQLLNKPLNK). A compositionally biased stretch (polar residues) spans 120-146 (QLKNPNKPNIYNSSQSQANLTNQNTKS). The span at 147-158 (KPSEHFNKDKKT) shows a compositional bias: basic and acidic residues. Residues 182–196 (KNINNNLKSNESSKN) are compositionally biased toward low complexity. The segment covering 201–214 (GDKRELSLKPDQNR) has biased composition (basic and acidic residues). Polar residues-rich tracts occupy residues 243-267 (KQNN…NRPG) and 386-397 (AKTNNQKQNIES). The span at 432–445 (RKDWDDSAKLEALR) shows a compositional bias: basic and acidic residues. Residues 499 to 519 (HKSTKQFKKKKKETTRQRQKR) show a composition bias toward basic residues. Residues 620-792 (KRPPVITVMG…ILLVSEVEDL (173 aa)) enclose the tr-type G domain. The tract at residues 629 to 636 (GHVDHGKT) is G1. Position 629–636 (629–636 (GHVDHGKT)) interacts with GTP. Positions 654-658 (GITQH) are G2. Positions 679-682 (DTPG) are G3. GTP contacts are provided by residues 679–683 (DTPGH) and 733–736 (NKID). Positions 733 to 736 (NKID) are G4. A G5 region spans residues 769–771 (SAI).

Belongs to the TRAFAC class translation factor GTPase superfamily. Classic translation factor GTPase family. IF-2 subfamily.

The protein localises to the cytoplasm. One of the essential components for the initiation of protein synthesis. Protects formylmethionyl-tRNA from spontaneous hydrolysis and promotes its binding to the 30S ribosomal subunits. Also involved in the hydrolysis of GTP during the formation of the 70S ribosomal complex. The chain is Translation initiation factor IF-2 from Prochlorococcus marinus (strain MIT 9312).